The following is a 268-amino-acid chain: MDVFNLLEAAFLGLIEGLTEFIPVSSTGHLLLIGHFLGFESTGKTFEVLIQLGAILAILTVYSAKLLKILTDFPRDARTRRFVFGILVAFLPAAVIGALAHGFIKSVLFETPMLVCIMLIIGGFILLWVDQLNLRPRYHDVMDYPLPMCLAIGFIQCLAMIPGVSRSGSTIVGSLLLGADKRSAAEFSFFLAMPTMAGAFAYDLYKSRNILSLNDGALIGVGFVMAFISGVFVVRYLLDYVSRHGFKLFGWWRLIVGSVGLAALLVWG.

Helical transmembrane passes span V3–P23, F46–L66, F84–I104, V107–L127, Y144–V164, A184–L204, L218–L238, and L248–G268.

Belongs to the UppP family.

It is found in the cell inner membrane. It carries out the reaction di-trans,octa-cis-undecaprenyl diphosphate + H2O = di-trans,octa-cis-undecaprenyl phosphate + phosphate + H(+). Functionally, catalyzes the dephosphorylation of undecaprenyl diphosphate (UPP). Confers resistance to bacitracin. The polypeptide is Undecaprenyl-diphosphatase (Brucella anthropi (strain ATCC 49188 / DSM 6882 / CCUG 24695 / JCM 21032 / LMG 3331 / NBRC 15819 / NCTC 12168 / Alc 37) (Ochrobactrum anthropi)).